The following is a 283-amino-acid chain: ATP synthase gamma chain (283 aa).

This sequence belongs to the ATPase gamma chain family. In terms of assembly, F-type ATPases have 2 components, CF(1) - the catalytic core - and CF(0) - the membrane proton channel. CF(1) has five subunits: alpha(3), beta(3), gamma(1), delta(1), epsilon(1). CF(0) has three main subunits: a, b and c.

It is found in the cell membrane. Functionally, produces ATP from ADP in the presence of a proton gradient across the membrane. The gamma chain is believed to be important in regulating ATPase activity and the flow of protons through the CF(0) complex. This chain is ATP synthase gamma chain, found in Exiguobacterium sibiricum (strain DSM 17290 / CCUG 55495 / CIP 109462 / JCM 13490 / 255-15).